The chain runs to 102 residues: Iron-sulfur cluster assembly protein CyaY (102 aa).

This sequence belongs to the frataxin family.

Functionally, involved in iron-sulfur (Fe-S) cluster assembly. May act as a regulator of Fe-S biogenesis. This chain is Iron-sulfur cluster assembly protein CyaY, found in Mannheimia succiniciproducens (strain KCTC 0769BP / MBEL55E).